A 195-amino-acid polypeptide reads, in one-letter code: Heavy metal-associated isoprenylated plant protein 18 (195 aa).

Disordered stretches follow at residues 36 to 76 (DVVQ…KPET) and 145 to 172 (EKEK…NPSS). Composition is skewed to basic and acidic residues over residues 47–76 (TVTK…KPET) and 145–157 (EKEK…ITKD). The 72-residue stretch at 78-149 (TRKLEIHIAF…RIVKMEKEKK (72 aa)) folds into the HMA domain. Cysteine methyl ester is present on Cys192. Residue Cys192 is the site of S-farnesyl cysteine attachment. The propeptide at 193–195 (SIS) is removed in mature form.

The protein belongs to the HIPP family.

In terms of biological role, probable heavy-metal-binding protein. Required for female gametophyte development and function. This Arabidopsis thaliana (Mouse-ear cress) protein is Heavy metal-associated isoprenylated plant protein 18.